Consider the following 436-residue polypeptide: tRNA(Ile)-lysidine synthase (436 aa).

27-32 (SGGVDS) lines the ATP pocket.

It belongs to the tRNA(Ile)-lysidine synthase family.

It localises to the cytoplasm. It catalyses the reaction cytidine(34) in tRNA(Ile2) + L-lysine + ATP = lysidine(34) in tRNA(Ile2) + AMP + diphosphate + H(+). Ligates lysine onto the cytidine present at position 34 of the AUA codon-specific tRNA(Ile) that contains the anticodon CAU, in an ATP-dependent manner. Cytidine is converted to lysidine, thus changing the amino acid specificity of the tRNA from methionine to isoleucine. This is tRNA(Ile)-lysidine synthase from Vibrio vulnificus (strain CMCP6).